Reading from the N-terminus, the 224-residue chain is Orotidine 5'-phosphate decarboxylase (224 aa).

Residues D10, K32, D59–T68, T115, R175, Q184, G204, and R205 contribute to the substrate site. K61 serves as the catalytic Proton donor.

Belongs to the OMP decarboxylase family. Type 1 subfamily. As to quaternary structure, homodimer.

The catalysed reaction is orotidine 5'-phosphate + H(+) = UMP + CO2. It functions in the pathway pyrimidine metabolism; UMP biosynthesis via de novo pathway; UMP from orotate: step 2/2. Catalyzes the decarboxylation of orotidine 5'-monophosphate (OMP) to uridine 5'-monophosphate (UMP). This Novosphingobium aromaticivorans (strain ATCC 700278 / DSM 12444 / CCUG 56034 / CIP 105152 / NBRC 16084 / F199) protein is Orotidine 5'-phosphate decarboxylase.